The chain runs to 518 residues: Protein translocase subunit SecD (518 aa).

The next 6 membrane-spanning stretches (helical) occupy residues 9-29 (IVLSIICTVFAIICALPNFIQ), 356-376 (GKKAGLIGFTAVCIFMILSYG), 377-397 (VIGLFANIALILALLYILALL), 406-426 (LPGIAGIILTMGMAVDANVLI), 451-473 (AFATIIDSNLTTLIVAFALYIFG), and 486-506 (IGIISSMFSAIIITKLLIDIW).

Belongs to the SecD/SecF family. SecD subfamily. In terms of assembly, forms a complex with SecF. Part of the essential Sec protein translocation apparatus which comprises SecA, SecYEG and auxiliary proteins SecDF-YajC and YidC.

It is found in the cell inner membrane. In terms of biological role, part of the Sec protein translocase complex. Interacts with the SecYEG preprotein conducting channel. SecDF uses the proton motive force (PMF) to complete protein translocation after the ATP-dependent function of SecA. This Rickettsia typhi (strain ATCC VR-144 / Wilmington) protein is Protein translocase subunit SecD.